Consider the following 773-residue polypeptide: Subtilisin-like protease SBT3.4 (773 aa).

A signal peptide spans 1-23 (MRNFRSSVLVVLSLIIVLNVARA). A propeptide spans 24 to 108 (SAKSKVHIVY…VIPDSYYELA (85 aa)) (activation peptide). Residues 29–108 (VHIVYLGEKQ…VIPDSYYELA (80 aa)) form the Inhibitor I9 domain. A Peptidase S8 domain is found at 112–620 (IWDYLGPSAD…GGLVNPEKAA (509 aa)). D142 acts as the Charge relay system in catalysis. N-linked (GlcNAc...) asparagine glycosylation occurs at N200. H216 (charge relay system) is an active-site residue. N-linked (GlcNAc...) asparagine glycans are attached at residues N231, N408, and N536. The PA domain occupies 382–474 (SLVYPEDPGN…IDNELGTDIL (93 aa)). S551 (charge relay system) is an active-site residue. N643 carries an N-linked (GlcNAc...) asparagine glycan.

This sequence belongs to the peptidase S8 family.

It localises to the secreted. The chain is Subtilisin-like protease SBT3.4 from Arabidopsis thaliana (Mouse-ear cress).